The following is a 115-amino-acid chain: U3-lycotoxin-Ls1a (115 aa).

The signal sequence occupies residues 1–20; it reads MKFVLLFGVFLVTLFSYSSA. Residues 21–44 constitute a propeptide that is removed on maturation; sequence EMLDDFGQADEDELLSLIEKEEAR. Disulfide bonds link Cys48/Cys63, Cys55/Cys72, Cys62/Cys87, and Cys74/Cys85.

This sequence belongs to the neurotoxin 19 (CSTX) family. 01 subfamily. As to expression, expressed by the venom gland.

It is found in the secreted. This Lycosa singoriensis (Wolf spider) protein is U3-lycotoxin-Ls1a.